We begin with the raw amino-acid sequence, 366 residues long: Ubiquitin carboxyl-terminal hydrolase 46 (366 aa).

In terms of domain architecture, USP spans 35-365 (FGLVNFGNTC…SGYILFYQSR (331 aa)). Residue Cys-44 is the Nucleophile of the active site. Zn(2+) is bound by residues Cys-182, Cys-185, Cys-229, and Cys-232. His-313 acts as the Proton acceptor in catalysis.

This sequence belongs to the peptidase C19 family. USP12/USP46 subfamily. As to quaternary structure, interacts with WDR48. Interacts with WDR20. Interacts with DMWD. Component of the USP46/WDR20/WDR48 deubiquitinating complex. Detected in lung and spleen, and at lower levels in brain, kidney, testis and liver.

It is found in the cytoplasm. The catalysed reaction is Thiol-dependent hydrolysis of ester, thioester, amide, peptide and isopeptide bonds formed by the C-terminal Gly of ubiquitin (a 76-residue protein attached to proteins as an intracellular targeting signal).. Deubiquitinating enzyme that plays a role in behavior, possibly by regulating GABA action. May act by mediating the deubiquitination of GAD1/GAD67. Has almost no deubiquitinating activity by itself and requires the interaction with WDR48 to have a high activity. Not involved in deubiquitination of monoubiquitinated FANCD2. This is Ubiquitin carboxyl-terminal hydrolase 46 from Rattus norvegicus (Rat).